We begin with the raw amino-acid sequence, 485 residues long: Argininosuccinate lyase (485 aa).

It belongs to the lyase 1 family. Argininosuccinate lyase subfamily.

It localises to the cytoplasm. The enzyme catalyses 2-(N(omega)-L-arginino)succinate = fumarate + L-arginine. It functions in the pathway amino-acid biosynthesis; L-arginine biosynthesis; L-arginine from L-ornithine and carbamoyl phosphate: step 3/3. The polypeptide is Argininosuccinate lyase (Paracidovorax citrulli (strain AAC00-1) (Acidovorax citrulli)).